A 208-amino-acid polypeptide reads, in one-letter code: UPF0637 protein BCG9842_B1177 (208 aa).

Belongs to the UPF0637 family.

This is UPF0637 protein BCG9842_B1177 from Bacillus cereus (strain G9842).